The following is a 746-amino-acid chain: F-box only protein 30 (746 aa).

The TRAF-type zinc-finger motif lies at 49-110 (EHRLLCPFER…SYSDRKSYES (62 aa)). Disordered regions lie at residues 222–241 (MDEE…DQDH) and 247–266 (IGAV…QAEQ). Basic and acidic residues predominate over residues 225 to 241 (ENNKESFQDKNLKDQDH). Positions 256–266 (SGTSQNAQAEQ) are enriched in polar residues. The residue at position 383 (S383) is a Phosphoserine. In terms of domain architecture, F-box spans 611 to 659 (SDHLSSLPFEVLQHIAGFLDGFSLCQLACVSRLMRDVCGSLLQSRGMVI).

As to quaternary structure, part of a SCF (SKP1-cullin-F-box) protein ligase complex. Interacts with SKP1, CUL1 and RBX1/ROC1. Auto-ubiquitinated. Post-translationally, may be neddylated. Neddylation may be required for E3 ligase activity, since it was observed only after purification with o-phenanthroline.

The protein operates within protein modification; protein ubiquitination. Substrate-recognition component of the SCF (SKP1-CUL1-F-box protein)-type E3 ubiquitin ligase complex. Required for muscle atrophy following denervation. This is F-box only protein 30 (Fbxo30) from Mus musculus (Mouse).